A 76-amino-acid polypeptide reads, in one-letter code: Small ribosomal subunit protein bS18 (76 aa).

Belongs to the bacterial ribosomal protein bS18 family. As to quaternary structure, part of the 30S ribosomal subunit. Forms a tight heterodimer with protein bS6.

In terms of biological role, binds as a heterodimer with protein bS6 to the central domain of the 16S rRNA, where it helps stabilize the platform of the 30S subunit. The chain is Small ribosomal subunit protein bS18 from Pseudomonas fluorescens (strain ATCC BAA-477 / NRRL B-23932 / Pf-5).